The following is a 799-amino-acid chain: MMHELDLRPHLARFAQRPLALLAWALLQGTSVNAQVAQVAPDEPPLPLKTSPLLQEQVAPALRSSLPTFISAEHIFGRPDLETVLEGRAELRRGDLVIKADRLEYDQPSDLATASGNVLINRAGNVYEGPLLELKLDTFEGFFNQPRYYFLKNDAHGQADRVDFIDDQRAVIHNATFTTCRRLPGPSWLPDWILRAASISLDNEEDVGTAKGALLSFKGVPLLPIPYLSFPLSDKRKSGVLPPILGLDNVNGAEVSVPYYWNIAPNRDATFTPTLMSKRGVNLSSELRYLEADYAGQVQLDLMPSDQLRDSTRWGLTYTHQATLQNSWTRPFTAGGVALNLNLNRVSDDNYWRDFTRASTGSLTQRLLTNDASLSWTEGNFSNTVRTLKWQTLQDVSAPITPPYDRLPQLATRYARSNVGGFDYSVDADYTRFQSERSLTLQPNAQRVFSVLQLSRPWVTAAGFITPKLQLNVSNYQFDTPLSNGARAASRVVPTLSVDSGLVFERDARYFGMNFRQTLEPRAFYVNTPFRDQRLLPNYDSGAVDFNFATIYTDNAFVGNDRISDSDLLTLGVSTRLLDPATGAQVARFGVAQRLRFRDQNVTLLPTDAPVTDRISDLLLGAAVNWDPKWAFDSTVQFNPTTKQSVRSTIGARYSAGHYRTVSAAYRYQRESSEQLDIGWQWPINDLWGERGQELGAGRGQGEGRWYSVGRLNYSMQERKLVDAVLGFEYDAGCWLGRIVLEQLQTSTASANQRIMFQLEFVGLTRLGVNPLKSLKDNIPGYQYLREQTSPPSRFSNYD.

Residues 1 to 34 form the signal peptide; the sequence is MMHELDLRPHLARFAQRPLALLAWALLQGTSVNA.

It belongs to the LptD family. As to quaternary structure, component of the lipopolysaccharide transport and assembly complex. Interacts with LptE and LptA.

It localises to the cell outer membrane. Together with LptE, is involved in the assembly of lipopolysaccharide (LPS) at the surface of the outer membrane. The sequence is that of LPS-assembly protein LptD from Albidiferax ferrireducens (strain ATCC BAA-621 / DSM 15236 / T118) (Rhodoferax ferrireducens).